An 83-amino-acid polypeptide reads, in one-letter code: Small ribosomal subunit protein bS20 (83 aa).

Belongs to the bacterial ribosomal protein bS20 family.

Functionally, binds directly to 16S ribosomal RNA. The chain is Small ribosomal subunit protein bS20 from Leuconostoc mesenteroides subsp. mesenteroides (strain ATCC 8293 / DSM 20343 / BCRC 11652 / CCM 1803 / JCM 6124 / NCDO 523 / NBRC 100496 / NCIMB 8023 / NCTC 12954 / NRRL B-1118 / 37Y).